The sequence spans 164 residues: 3-isopropylmalate dehydratase small subunit (164 aa).

The protein belongs to the LeuD family. LeuD type 2 subfamily. In terms of assembly, heterodimer of LeuC and LeuD.

The catalysed reaction is (2R,3S)-3-isopropylmalate = (2S)-2-isopropylmalate. The protein operates within amino-acid biosynthesis; L-leucine biosynthesis; L-leucine from 3-methyl-2-oxobutanoate: step 2/4. In terms of biological role, catalyzes the isomerization between 2-isopropylmalate and 3-isopropylmalate, via the formation of 2-isopropylmaleate. This chain is 3-isopropylmalate dehydratase small subunit, found in Syntrophus aciditrophicus (strain SB).